Reading from the N-terminus, the 847-residue chain is Rho GTPase-activating protein 12 (847 aa).

Residues 12–74 (PGQAYIEVEY…PAQYVKEVTR (63 aa)) enclose the SH3 domain. Residues 110–241 (LPELSSFGKP…PPNQGRPDSP (132 aa)) form a disordered region. Composition is skewed to polar residues over residues 117-174 (GKPS…QNRT) and 191-200 (TSFSQEQSCD). Residue serine 165 is modified to Phosphoserine. A phosphoserine mark is found at serine 201, serine 213, and serine 215. Over residues 224 to 234 (TEQIRATTPPN) the composition is skewed to polar residues. Threonine 230 and threonine 231 each carry phosphothreonine. A Phosphoserine modification is found at serine 240. Tyrosine 243 bears the Phosphotyrosine mark. WW domains are found at residues 265 to 298 (IQIN…PPRW) and 358 to 391 (DYTN…LPKY). The interval 293 to 317 (WKPPRWTRDASISKGDFQSPGDQEL) is disordered. Disordered regions lie at residues 428–466 (DTND…DQEK) and 591–625 (PDSP…SEQK). A compositionally biased stretch (polar residues) spans 445 to 461 (NESSPSSPKHQDTASSP). Residues 463-575 (DQEKYGLLNV…WFKVLSSTIN (113 aa)) enclose the PH domain. A Phosphoserine modification is found at serine 593. Over residues 595–610 (GIEKHDKEKEQKDPKK) the composition is skewed to basic and acidic residues. A Rho-GAP domain is found at 657–845 (SNLANLCQRE…LILLELSSIF (189 aa)).

Functionally, GTPase activator for the Rho-type GTPases by converting them to an inactive GDP-bound state. The protein is Rho GTPase-activating protein 12 (ARHGAP12) of Macaca fascicularis (Crab-eating macaque).